Consider the following 186-residue polypeptide: Elongation factor P (186 aa).

This sequence belongs to the elongation factor P family.

Its subcellular location is the cytoplasm. It participates in protein biosynthesis; polypeptide chain elongation. Involved in peptide bond synthesis. Stimulates efficient translation and peptide-bond synthesis on native or reconstituted 70S ribosomes in vitro. Probably functions indirectly by altering the affinity of the ribosome for aminoacyl-tRNA, thus increasing their reactivity as acceptors for peptidyl transferase. This is Elongation factor P from Synechococcus sp. (strain RCC307).